We begin with the raw amino-acid sequence, 194 residues long: Endoribonuclease ToxN (194 aa).

Residues 114–182 (MLKQYLFLKE…DQAKERDKAR (69 aa)) are a coiled coil. The span at 171 to 182 (ERDQAKERDKAR) shows a compositional bias: basic and acidic residues. Positions 171–194 (ERDQAKERDKARRIAYMRQMGRER) are disordered.

This sequence belongs to the ToxN/AbiQ toxin family. One ToxN monomer binds to a 34-nt-long single repeat of the ToxI RNA; this complex forms a triangular heterohexameric complex with ToxN connected by the ToxI RNA to another toxin molecule. The ToxI repeats are cleavage products of their precursor. The ToxI repeat forms a pseudoknot which occludes the toxin active site.

In terms of biological role, toxic component of a type III toxin-antitoxin (TA) system. An endoribonuclease which cleaves between the first and second A of AAAAA sequences; it tolerates other nucleotides in positions +2 and +4 of the consensus. Digests cognate antitoxin RNA ToxI as shown by the 2'-3'-cyclic phosphate at the 3' end of the 34-nt repeats and probably other RNAs. Inhibits growth when expressed in E.coli without causing cell lysis; this bacteriostatic effect is neutralized by cognate RNA antitoxin ToxI, which has 2.9 nearly identical 34 nucleotide-long repeats. Non-cognate antitoxin RNA from P.atrosepticum does not inhibit this toxin. The toxin-antitoxin pair function in plasmid maintenance (a plasmid addiction system), but unlike its P.atrosepticum homolog it is not seen to confer resistance to bacteriophages. This Bacillus thuringiensis subsp. kurstaki protein is Endoribonuclease ToxN.